Here is a 364-residue protein sequence, read N- to C-terminus: Aminomethyltransferase (364 aa).

The protein belongs to the GcvT family. As to quaternary structure, the glycine cleavage system is composed of four proteins: P, T, L and H.

The enzyme catalyses N(6)-[(R)-S(8)-aminomethyldihydrolipoyl]-L-lysyl-[protein] + (6S)-5,6,7,8-tetrahydrofolate = N(6)-[(R)-dihydrolipoyl]-L-lysyl-[protein] + (6R)-5,10-methylene-5,6,7,8-tetrahydrofolate + NH4(+). In terms of biological role, the glycine cleavage system catalyzes the degradation of glycine. The protein is Aminomethyltransferase of Shewanella sediminis (strain HAW-EB3).